A 512-amino-acid polypeptide reads, in one-letter code: Ascofuranone/ascochlorin biosynthesis clusters transcription regulator (512 aa).

Residues Cys14–Cys49 constitute a DNA-binding region (zn(2)-C6 fungal-type). Disordered regions lie at residues Arg54–Ile87, Gly118–Met148, and Gly325–Ile351. A compositionally biased stretch (basic residues) spans Lys56–Arg70. Low complexity-rich tracts occupy residues Gly118–Ser127 and Thr327–Met342.

It is found in the nucleus. Functionally, transcription factor that regulates the expression of the asc-1 and asc-2 gene clusters that mediate the biosynthesis of both ascochlorin and ascofuranone, a strong inhibitor of cyanide-insensitive alternative oxidases and a promising drug candidate against African trypanosomiasis. Binds the 5'-CGGYGNNTTW-3' motif within promoters of the target genes. This Acremonium egyptiacum (Oospora egyptiaca) protein is Ascofuranone/ascochlorin biosynthesis clusters transcription regulator.